We begin with the raw amino-acid sequence, 741 residues long: Photosystem I P700 chlorophyll a apoprotein A2 1 (741 aa).

8 consecutive transmembrane segments (helical) span residues 46–69 (IFAT…FHVA), 135–158 (LYTG…LHLQ), 175–199 (LNHH…HVAI), 273–291 (MAHH…GHMY), 334–357 (LHFQ…QHMY), 373–399 (AALY…IFLV), 421–443 (AIIS…LYVH), and 524–542 (FLVH…LILV). 2 residues coordinate [4Fe-4S] cluster: Cys-566 and Cys-575. Helical transmembrane passes span 582–603 (SFYL…YWHW) and 650–672 (LSVW…MFLI). 3 residues coordinate chlorophyll a: His-661, Met-669, and Tyr-677. Trp-678 provides a ligand contact to phylloquinone. The helical transmembrane segment at 714-734 (VVGLAHFTVGYVLTYAAFLIA) threads the bilayer.

The protein belongs to the PsaA/PsaB family. The PsaA/B heterodimer binds the P700 chlorophyll special pair and subsequent electron acceptors. PSI consists of a core antenna complex that captures photons, and an electron transfer chain that converts photonic excitation into a charge separation. The cyanobacterial PSI reaction center is composed of one copy each of PsaA,B,C,D,E,F,I,J,K,L,M and X, and forms trimeric complexes. PSI electron transfer chain: 5 chlorophyll a, 1 chlorophyll a', 2 phylloquinones and 3 4Fe-4S clusters. PSI core antenna: 90 chlorophyll a, 22 carotenoids, 3 phospholipids and 1 galactolipid. P700 is a chlorophyll a/chlorophyll a' dimer, A0 is one or more chlorophyll a, A1 is one or both phylloquinones and FX is a shared 4Fe-4S iron-sulfur center. is required as a cofactor.

Its subcellular location is the cellular thylakoid membrane. The catalysed reaction is reduced [plastocyanin] + hnu + oxidized [2Fe-2S]-[ferredoxin] = oxidized [plastocyanin] + reduced [2Fe-2S]-[ferredoxin]. In terms of biological role, psaA and PsaB bind P700, the primary electron donor of photosystem I (PSI), as well as the electron acceptors A0, A1 and FX. PSI is a plastocyanin/cytochrome c6-ferredoxin oxidoreductase, converting photonic excitation into a charge separation, which transfers an electron from the donor P700 chlorophyll pair to the spectroscopically characterized acceptors A0, A1, FX, FA and FB in turn. Oxidized P700 is reduced on the lumenal side of the thylakoid membrane by plastocyanin or cytochrome c6. This chain is Photosystem I P700 chlorophyll a apoprotein A2 1 (psaB1), found in Nostoc sp. (strain PCC 7120 / SAG 25.82 / UTEX 2576).